A 412-amino-acid polypeptide reads, in one-letter code: D-nopaline dehydrogenase (412 aa).

The protein belongs to the lysopine/nopaline/octopine/opine/vitopine dehydrogenases family. As to quaternary structure, homotetramer.

The enzyme catalyses D-nopaline + NADP(+) + H2O = L-arginine + 2-oxoglutarate + NADPH + H(+). This chain is D-nopaline dehydrogenase (nos), found in Agrobacterium vitis (Rhizobium vitis).